A 119-amino-acid chain; its full sequence is Holo-[acyl-carrier-protein] synthase (119 aa).

Residues Asp-8 and Glu-58 each coordinate Mg(2+).

It belongs to the P-Pant transferase superfamily. AcpS family. Mg(2+) serves as cofactor.

It is found in the cytoplasm. The enzyme catalyses apo-[ACP] + CoA = holo-[ACP] + adenosine 3',5'-bisphosphate + H(+). Transfers the 4'-phosphopantetheine moiety from coenzyme A to a Ser of acyl-carrier-protein. This chain is Holo-[acyl-carrier-protein] synthase, found in Bacillus cereus (strain B4264).